The sequence spans 309 residues: Pyridoxal kinase (309 aa).

T2 is modified (N-acetylthreonine; in Pyridoxal kinase, N-terminally processed). S23 and T58 together coordinate pyridoxal. T58 serves as a coordination point for pyridoxal 5'-phosphate. D124 is a binding site for ATP. D124 serves as a coordination point for Na(+). Residue D129 participates in Mg(2+) binding. T155 contributes to the Na(+) binding site. ATP-binding positions include 157 to 160 (NQFE), 193 to 194 (TS), 225 to 227 (IPA), and T232. A Na(+)-binding site is contributed by T193. Position 233-234 (233-234 (GD)) interacts with pyridoxal 5'-phosphate. Catalysis depends on D234, which acts as the Proton acceptor.

This sequence belongs to the pyridoxine kinase family. In terms of assembly, homodimer. It depends on Zn(2+) as a cofactor. Expressed ubiquitously in leaves, stems, roots, flowers and siliques. Present in root hairs and other tip-growing cells such as papillar cells on the top of stigma.

The enzyme catalyses pyridoxal + ATP = pyridoxal 5'-phosphate + ADP + H(+). It participates in cofactor metabolism; pyridoxal 5'-phosphate salvage; pyridoxal 5'-phosphate from pyridoxal: step 1/1. Catalyzes the transfer of a phosphate group from ATP to the 5-hydroxylmethyl group of pyridoxal to form the biologically active pyridoxal phosphate, an active form of vitamin B6. Required for Na(+) and K(+) homeostasis and for salt tolerance. Involved in root hair development, both for initiation and tip growth. This Arabidopsis thaliana (Mouse-ear cress) protein is Pyridoxal kinase.